Reading from the N-terminus, the 248-residue chain is ATP synthase subunit a, chloroplastic (248 aa).

5 helical membrane-spanning segments follow: residues 38 to 58 (QVLITSWVVIAILLGSAAIAV), 96 to 116 (VPFIGTLFLFIFVSNWSGALL), 135 to 155 (INTTVALALPTSVAYFYAGLT), 200 to 220 (LVVVVLVSLVPLVIPIPVMFL), and 221 to 241 (GLFTSGIQALIFATLAAAYIG).

Belongs to the ATPase A chain family. F-type ATPases have 2 components, CF(1) - the catalytic core - and CF(0) - the membrane proton channel. CF(1) has five subunits: alpha(3), beta(3), gamma(1), delta(1), epsilon(1). CF(0) has four main subunits: a, b, b' and c.

Its subcellular location is the plastid. The protein resides in the chloroplast thylakoid membrane. Functionally, key component of the proton channel; it plays a direct role in the translocation of protons across the membrane. This Nymphaea alba (White water-lily) protein is ATP synthase subunit a, chloroplastic.